Consider the following 221-residue polypeptide: Endo-1,4-beta-xylanase 11A (221 aa).

A signal peptide spans 1–18 (MKFATVLAFATAAGAAFA). In terms of domain architecture, GH11 spans 23–220 (SSETTEAGQL…GTGSASMSVS (198 aa)). Residue E111 is the Nucleophile of the active site. An N-linked (GlcNAc...) asparagine glycan is attached at N117. The active-site Proton donor is the E207.

This sequence belongs to the glycosyl hydrolase 11 (cellulase G) family.

The protein localises to the secreted. It catalyses the reaction Endohydrolysis of (1-&gt;4)-beta-D-xylosidic linkages in xylans.. It participates in glycan degradation; xylan degradation. Its function is as follows. Endo-1,4-beta-xylanase involved in the hydrolysis of xylan, a major structural heterogeneous polysaccharide found in plant biomass representing the second most abundant polysaccharide in the biosphere, after cellulose. The protein is Endo-1,4-beta-xylanase 11A (XYN11A) of Mycosarcoma maydis (Corn smut fungus).